The chain runs to 491 residues: Glutathione synthetase GSH2 (491 aa).

Residue R128 coordinates substrate. E146 provides a ligand contact to ATP. Positions 146 and 148 each coordinate Mg(2+). Substrate-binding positions include 150–153 (VSVS), 228–230 (ERN), Q234, and 285–288 (RTGY). ATP is bound by residues K324, 382 to 391 (KPQREGGGNN), Y393, 415 to 418 (MELI), and E442. E386 contacts Mg(2+). R467 lines the substrate pocket. The ATP site is built by K469 and E475. Position 478-479 (478-479 (VA)) interacts with substrate.

This sequence belongs to the eukaryotic GSH synthase family. As to quaternary structure, homodimer. The cofactor is Mg(2+).

It catalyses the reaction gamma-L-glutamyl-L-cysteine + glycine + ATP = glutathione + ADP + phosphate + H(+). The protein operates within sulfur metabolism; glutathione biosynthesis; glutathione from L-cysteine and L-glutamate: step 2/2. The sequence is that of Glutathione synthetase GSH2 (GSH2) from Saccharomyces cerevisiae (strain ATCC 204508 / S288c) (Baker's yeast).